The sequence spans 148 residues: uncharacterized protein (148 aa).

Residues 1-21 (MLQNYAIVLGMAVAVAIWYFF) form a helical membrane-spanning segment. The tract at residues 27 to 61 (APPGPNPPKPDPPKPDPPKMHMPKKKPHWMDPHLT) is disordered.

The protein resides in the host membrane. This is an uncharacterized protein from Frog virus 3 (isolate Goorha) (FV-3).